A 24-amino-acid polypeptide reads, in one-letter code: Coenzyme PQQ synthesis protein A (24 aa).

A cross-link (pyrroloquinoline quinone (Glu-Tyr)) is located at residues 16–20 (EITMY).

It belongs to the PqqA family.

It functions in the pathway cofactor biosynthesis; pyrroloquinoline quinone biosynthesis. Its function is as follows. Required for coenzyme pyrroloquinoline quinone (PQQ) biosynthesis. PQQ is probably formed by cross-linking a specific glutamate to a specific tyrosine residue and excising these residues from the peptide. The chain is Coenzyme PQQ synthesis protein A from Cupriavidus taiwanensis (strain DSM 17343 / BCRC 17206 / CCUG 44338 / CIP 107171 / LMG 19424 / R1) (Ralstonia taiwanensis (strain LMG 19424)).